The sequence spans 311 residues: Olfactory receptor 5P3 (311 aa).

The Extracellular segment spans residues 1 to 25 (MGTGNDTTVVEFTLLGLSEDTTVCA). N-linked (GlcNAc...) asparagine glycosylation occurs at Asn5. The helical transmembrane segment at 26–46 (ILFLVFLGIYVVTLMGNISII) threads the bilayer. Topologically, residues 47 to 54 (VLIRRSHH) are cytoplasmic. A helical transmembrane segment spans residues 55–75 (LHTPMYIFLCHLAFVDIGYSS). At 76–99 (SVTPVMLMSFLRKETSLPVAGCVA) the chain is on the extracellular side. A disulfide bond links Cys97 and Cys189. The helical transmembrane segment at 100–120 (QLCSVVTFGTAECFLLAAMAY) threads the bilayer. At 121–139 (DRYVAICSPLLYSTCMSPG) the chain is on the cytoplasmic side. A helical transmembrane segment spans residues 140 to 160 (VCIILVGMSYLGGCVNAWTFI). Topologically, residues 161 to 196 (GCLLRLSFCGPNKVNHFFCDYSPLLKLACSHDFTFE) are extracellular. Residues 197 to 217 (IIPAISSGSIIVATVCVIAIS) traverse the membrane as a helical segment. The Cytoplasmic segment spans residues 218-237 (YIYILITILKMHSTKGRHKA). A helical membrane pass occupies residues 238–258 (FSTCTSHLTAVTLFYGTITFI). The Extracellular segment spans residues 259-271 (YVMPKSSYSTDQN). Residues 272–292 (KVVSVFYTVVIPMLNPLIYSL) form a helical membrane-spanning segment. The Cytoplasmic portion of the chain corresponds to 293–311 (RNKEIKGALKRELRIKIFS).

The protein belongs to the G-protein coupled receptor 1 family. In terms of tissue distribution, expressed in the tongue.

The protein localises to the cell membrane. Functionally, odorant receptor (Potential). May be involved in taste perception. This chain is Olfactory receptor 5P3 (OR5P3), found in Homo sapiens (Human).